A 1162-amino-acid chain; its full sequence is Cartilage intermediate layer protein 2 (1162 aa).

A signal peptide spans 1 to 20; that stretch reads MASPLPLLYLCLAALHLAGA. Positions 23-51 are disordered; the sequence is ATPTEEHTSTARGLQGRPPDTGQPSPALE. The TSP type-1 domain occupies 146-197; that stretch reads EAAWGAWGAWGLCSKSCGLGRRLRRRSCQSSSGDTCPGSPQEAQKCVRSRCP. Cystine bridges form between C158–C191, C162–C196, C173–C181, and C314–C360. Positions 293–377 constitute an Ig-like C2-type domain; the sequence is PYLVKHPESR…TVRSRAALLT (85 aa). An N-linked (GlcNAc...) asparagine glycan is attached at N330.

May be cleaved into 2 chains possibly by a furin-like protease upon or preceding secretion. In terms of processing, N-glycosylated. As to expression, expressed in articulated and meniscal cartilage (at protein level). Also detected in heart, skeletal muscle and brain. Not detected in growth plate cartilage.

The protein localises to the secreted. It localises to the extracellular space. The protein resides in the extracellular matrix. Its function is as follows. May play a role in cartilage scaffolding. The sequence is that of Cartilage intermediate layer protein 2 from Mus musculus (Mouse).